Reading from the N-terminus, the 635-residue chain is Very-long-chain aldehyde decarbonylase GL1-6 (635 aa).

A run of 4 helical transmembrane segments spans residues 46 to 66 (LLNF…QLWI), 100 to 120 (IILT…AQVA), 127 to 147 (GMVV…YWLH), and 183 to 203 (VVYF…GTVS). Positions 139–273 (VEFLYYWLHR…MPVYDYIYGT (135 aa)) constitute a Fatty acid hydroxylase domain.

Belongs to the sterol desaturase family. In terms of assembly, homodimer. In terms of tissue distribution, expressed in germinating seeds and shoots.

The protein resides in the endoplasmic reticulum membrane. It catalyses the reaction a long-chain fatty aldehyde + 2 NADPH + O2 + H(+) = a long-chain alkane + formate + 2 NADP(+) + H2O. Its function is as follows. Aldehyde decarbonylase involved in the conversion of aldehydes to alkanes. Core component of a very-long-chain alkane synthesis complex. The polypeptide is Very-long-chain aldehyde decarbonylase GL1-6 (Oryza sativa subsp. japonica (Rice)).